Consider the following 507-residue polypeptide: MFS-type transporter acdC (507 aa).

The tract at residues 1 to 50 (MSPNAPAVDIGAAPSLDTPEGDTKQPAEDHVEKDSNLVDWDGPDDPEHPQ) is disordered. Over residues 21 to 36 (GDTKQPAEDHVEKDSN) the composition is skewed to basic and acidic residues. The N-linked (GlcNAc...) asparagine glycan is linked to Asn51. The helical transmembrane segment at 58–78 (WGITFSLASMTMWITFSSSVL) threads the bilayer. N-linked (GlcNAc...) asparagine glycosylation occurs at Asn90. 5 helical membrane passes run 95–115 (VMPL…LCWA), 125–145 (LPTF…AVAP), 155–175 (FFVG…MADI), 186–206 (PFFF…GGFI), and 215–235 (WTAW…LLIV). N-linked (GlcNAc...) asparagine glycosylation is present at Asn257. A run of 6 helical transmembrane segments spans residues 290–310 (PILI…YLFL), 328–348 (IAGL…GIII), 371–391 (LVEM…FGWA), 395–415 (HWMV…VLFM), 442–462 (FLGG…GVDW), and 466–486 (ILGF…IFGA).

The protein belongs to the major facilitator superfamily. CAR1 family.

It is found in the membrane. In terms of biological role, MFS-type transporter; part of the gene cluster that mediates the biosynthesis of aspcandine, a pyrrolobenzazepine alkaloid. This is MFS-type transporter acdC from Aspergillus candidus.